The primary structure comprises 322 residues: Ribokinase (322 aa).

Substrate contacts are provided by residues 25–27 (MTD), 53–57 (GKGAN), and E154. ATP is bound by residues N199, 235–240 (TLGAEG), and T256. K(+)-binding residues include D263 and T265. ATP contacts are provided by residues 268 to 269 (GD) and N295. D269 serves as a coordination point for substrate. The active-site Proton acceptor is the D269. K(+) is bound by residues S301, A304, G306, and S310.

The protein belongs to the carbohydrate kinase PfkB family. Ribokinase subfamily. In terms of assembly, homodimer. Requires Mg(2+) as cofactor.

It is found in the cytoplasm. The protein resides in the nucleus. It catalyses the reaction D-ribose + ATP = D-ribose 5-phosphate + ADP + H(+). Its pathway is carbohydrate metabolism; D-ribose degradation; D-ribose 5-phosphate from beta-D-ribopyranose: step 2/2. With respect to regulation, activated by a monovalent cation that binds near, but not in, the active site. The most likely occupant of the site in vivo is potassium. Ion binding induces a conformational change that may alter substrate affinity. Competitively inhibited by phosphonoacetic acid, etidronate, 2-carboxethylphosphonic acid, N-(phosphonomethyl)glycine, N-(phosphonomethyl)iminodiacetic acid and clodronate. Functionally, catalyzes the phosphorylation of ribose at O-5 in a reaction requiring ATP and magnesium. The resulting D-ribose-5-phosphate can then be used either for sythesis of nucleotides, histidine, and tryptophan, or as a component of the pentose phosphate pathway. This is Ribokinase from Homo sapiens (Human).